The chain runs to 196 residues: Protein GrpE (196 aa).

Residues M1–P39 are disordered.

Belongs to the GrpE family. In terms of assembly, homodimer.

The protein localises to the cytoplasm. Participates actively in the response to hyperosmotic and heat shock by preventing the aggregation of stress-denatured proteins, in association with DnaK and GrpE. It is the nucleotide exchange factor for DnaK and may function as a thermosensor. Unfolded proteins bind initially to DnaJ; upon interaction with the DnaJ-bound protein, DnaK hydrolyzes its bound ATP, resulting in the formation of a stable complex. GrpE releases ADP from DnaK; ATP binding to DnaK triggers the release of the substrate protein, thus completing the reaction cycle. Several rounds of ATP-dependent interactions between DnaJ, DnaK and GrpE are required for fully efficient folding. This Escherichia coli O139:H28 (strain E24377A / ETEC) protein is Protein GrpE.